Consider the following 492-residue polypeptide: Ribose import ATP-binding protein RbsA (492 aa).

2 consecutive ABC transporter domains span residues 3-239 (IEMK…VGRS) and 249-492 (AEIR…TGGQ). Residue 35 to 42 (GENGAGKS) coordinates ATP.

The protein belongs to the ABC transporter superfamily. Ribose importer (TC 3.A.1.2.1) family. In terms of assembly, the complex is composed of an ATP-binding protein (RbsA), two transmembrane proteins (RbsC) and a solute-binding protein (RbsB).

It localises to the cell membrane. The enzyme catalyses D-ribose(out) + ATP + H2O = D-ribose(in) + ADP + phosphate + H(+). Its function is as follows. Part of the ABC transporter complex RbsABC involved in ribose import. Responsible for energy coupling to the transport system. The sequence is that of Ribose import ATP-binding protein RbsA from Lactococcus lactis subsp. lactis (strain IL1403) (Streptococcus lactis).